The chain runs to 20 residues: Astacin-like peptidase p18 (20 aa).

Positions 1-20 (NAIPGNYYRWPYAKVPYVID) constitute a Peptidase M12A domain.

It depends on Zn(2+) as a cofactor.

Its function is as follows. Active against casein. Has a role as a digestive enzyme. The sequence is that of Astacin-like peptidase p18 from Argiope aurantia (Black-and-yellow garden spider).